The following is a 313-amino-acid chain: uncharacterized protein (313 aa).

Helical transmembrane passes span 42 to 64 (LVVLFNGALLLLCMGTGYVLFLT) and 74 to 96 (VRAYGIFFLIFLLLFLLINTLYV).

The protein localises to the cell membrane. This is an uncharacterized protein from Treponema pallidum (strain Nichols).